We begin with the raw amino-acid sequence, 189 residues long: dCTP deaminase (189 aa).

Residues 112–117 (KSTYAR), 136–138 (TLE), Q157, Y171, and Q181 contribute to the dCTP site. The Proton donor/acceptor role is filled by E138.

This sequence belongs to the dCTP deaminase family. In terms of assembly, homotrimer.

The catalysed reaction is dCTP + H2O + H(+) = dUTP + NH4(+). The protein operates within pyrimidine metabolism; dUMP biosynthesis; dUMP from dCTP (dUTP route): step 1/2. Its function is as follows. Catalyzes the deamination of dCTP to dUTP. This is dCTP deaminase from Leptothrix cholodnii (strain ATCC 51168 / LMG 8142 / SP-6) (Leptothrix discophora (strain SP-6)).